The chain runs to 173 residues: MAVQGQRFMTKTQHYRKVTKPLLERKRRARMNLYLDELKDLIVDTMDAQGEQVSKLEKADILELTVNYLKAQQQQRVANPQSPPPDQVNLDKFRAGYTQAAYEVSHIFSTVPGLDLKFGTHLMKQLGHQLKDMKQEEEIIDMAEEPVNLADQKRSKSPREEDIHHGEEVWRPW.

The bHLH domain maps to 15-72 (YRKVTKPLLERKRRARMNLYLDELKDLIVDTMDAQGEQVSKLEKADILELTVNYLKAQ). Positions 93 to 126 (FRAGYTQAAYEVSHIFSTVPGLDLKFGTHLMKQL) constitute an Orange domain. The tract at residues 147-173 (VNLADQKRSKSPREEDIHHGEEVWRPW) is disordered. Residues 151–173 (DQKRSKSPREEDIHHGEEVWRPW) show a composition bias toward basic and acidic residues. Residues 170–173 (WRPW) carry the WRPW motif motif.

As to quaternary structure, transcription repression requires formation of a complex with a corepressor protein (Groucho).

The protein resides in the nucleus. In terms of biological role, transcriptional repressor of genes that require a bHLH protein for their transcription. May serve as a transcriptional regulator of the Achaete-scute complex (AS-C) genes. Contributes to the neural-epidermal lineage decision during early neurogenesis. As part of the Notch signaling pathway, required to maintain the self-renewal and identity of type II neuroblasts by regulating the expression of the transcriptional repressor erm. This Drosophila melanogaster (Fruit fly) protein is Enhancer of split mdelta protein.